The sequence spans 793 residues: Pleckstrin homology domain-containing family H member 3 (793 aa).

A signal peptide spans 1–18; that stretch reads MPLPGGLWWLLCCRRGFT. The tract at residues 28-62 is disordered; that stretch reads ELSGDGDEDEDEETFELRTPSPAGGGRGPLEVTLT. Positions 29 to 41 are enriched in acidic residues; the sequence is LSGDGDEDEDEET. Ser30 bears the Phosphoserine mark. The PH domain maps to 95-199; sequence DIVVKGWLYR…WGVALREVIA (105 aa). The MyTH4 domain occupies 237 to 399; sequence HTSGALYAPL…PSLAEISALS (163 aa). Residues 404-754 form the FERM domain; it reads LLCTVHCPGA…AYLANPSPER (351 aa). Disordered stretches follow at residues 554–586 and 598–622; these read VPLP…SAAL and KRRA…EGGG. The segment covering 598 to 608 has biased composition (basic residues); the sequence is KRRAERARRGG. An omega-N-methylarginine mark is found at Arg638 and Arg642. A compositionally biased stretch (low complexity) spans 750-762; that stretch reads PSPERPCSSSSPP. A disordered region spans residues 750-793; the sequence is PSPERPCSSSSPPCQDLPDTSPPSQRPGLDEPQGQSGCLGQLQD. Residues 782-793 are compositionally biased toward polar residues; that stretch reads QGQSGCLGQLQD.

The polypeptide is Pleckstrin homology domain-containing family H member 3 (PLEKHH3) (Homo sapiens (Human)).